Here is a 293-residue protein sequence, read N- to C-terminus: Small ribosomal subunit biogenesis GTPase RsgA (293 aa).

Residues 63-223 form the CP-type G domain; the sequence is KNELVRPPIA…VADTPGFSSL (161 aa). GTP is bound by residues 112 to 115 and 166 to 174; these read SKMD and GQSGVGKSS. Positions 247, 252, 254, and 260 each coordinate Zn(2+).

It belongs to the TRAFAC class YlqF/YawG GTPase family. RsgA subfamily. As to quaternary structure, monomer. Associates with 30S ribosomal subunit, binds 16S rRNA. Zn(2+) is required as a cofactor.

It is found in the cytoplasm. Its function is as follows. One of several proteins that assist in the late maturation steps of the functional core of the 30S ribosomal subunit. Helps release RbfA from mature subunits. May play a role in the assembly of ribosomal proteins into the subunit. Circularly permuted GTPase that catalyzes slow GTP hydrolysis, GTPase activity is stimulated by the 30S ribosomal subunit. The chain is Small ribosomal subunit biogenesis GTPase RsgA from Bacillus cereus (strain ATCC 10987 / NRS 248).